We begin with the raw amino-acid sequence, 565 residues long: Oxygen-dependent choline dehydrogenase (565 aa).

Residue 6–35 coordinates FAD; the sequence is DYIIIGAGSAGNVLATRLTEDADVSVLLLE. The active-site Proton acceptor is H475. A disordered region spans residues 541–565; the sequence is RSNAPYFVAGERPVRGQPQRAVSAA.

This sequence belongs to the GMC oxidoreductase family. Requires FAD as cofactor.

The catalysed reaction is choline + A = betaine aldehyde + AH2. It catalyses the reaction betaine aldehyde + NAD(+) + H2O = glycine betaine + NADH + 2 H(+). Its pathway is amine and polyamine biosynthesis; betaine biosynthesis via choline pathway; betaine aldehyde from choline (cytochrome c reductase route): step 1/1. In terms of biological role, involved in the biosynthesis of the osmoprotectant glycine betaine. Catalyzes the oxidation of choline to betaine aldehyde and betaine aldehyde to glycine betaine at the same rate. The polypeptide is Oxygen-dependent choline dehydrogenase (Ectopseudomonas mendocina (strain ymp) (Pseudomonas mendocina)).